A 262-amino-acid polypeptide reads, in one-letter code: Large ribosomal subunit protein bL9m (262 aa).

The N-terminal 49 residues, 1 to 49 (MAASMAPRCSSLLWAGAAWLRQRGIGELLQPRIERSTPGRDFSLSHYQS), are a transit peptide targeting the mitochondrion.

The protein belongs to the bacterial ribosomal protein bL9 family. As to quaternary structure, component of the mitochondrial ribosome large subunit (39S) which comprises a 16S rRNA and about 50 distinct proteins.

It localises to the mitochondrion. The protein is Large ribosomal subunit protein bL9m (Mrpl9) of Rattus norvegicus (Rat).